Here is a 102-residue protein sequence, read N- to C-terminus: Phosphoribosyl-ATP pyrophosphatase (102 aa).

This sequence belongs to the PRA-PH family.

The protein localises to the cytoplasm. The enzyme catalyses 1-(5-phospho-beta-D-ribosyl)-ATP + H2O = 1-(5-phospho-beta-D-ribosyl)-5'-AMP + diphosphate + H(+). The protein operates within amino-acid biosynthesis; L-histidine biosynthesis; L-histidine from 5-phospho-alpha-D-ribose 1-diphosphate: step 2/9. The polypeptide is Phosphoribosyl-ATP pyrophosphatase (Dinoroseobacter shibae (strain DSM 16493 / NCIMB 14021 / DFL 12)).